A 206-amino-acid polypeptide reads, in one-letter code: Probable glutathione S-transferase 7 (206 aa).

The region spanning 2–79 is the GST N-terminal domain; the sequence is VHYKVSYFPI…YLARQFGING (78 aa). Glutathione contacts are provided by residues Tyr8, Trp39, Lys43, 49 to 51, and 63 to 64; these read GQL and QS. One can recognise a GST C-terminal domain in the interval 81 to 206; sequence CAWEEAQVNS…WLETRPVTPF (126 aa).

Belongs to the GST superfamily. Sigma family.

The enzyme catalyses RX + glutathione = an S-substituted glutathione + a halide anion + H(+). Its function is as follows. Conjugation of reduced glutathione to a wide number of exogenous and endogenous hydrophobic electrophiles. May play a role in the detoxification of reactive oxygen species produced during pathogenic bacterial infection. The polypeptide is Probable glutathione S-transferase 7 (gst-7) (Caenorhabditis elegans).